Reading from the N-terminus, the 286-residue chain is uncharacterized protein (286 aa).

3 residues coordinate NADP(+): I54, N128, and K162. Catalysis depends on S178, which acts as the Proton donor. The NADP(+) site is built by Y192, K196, I225, and T227. Y192 serves as the catalytic Proton acceptor. The Lowers pKa of active site Tyr role is filled by K196.

This sequence belongs to the short-chain dehydrogenases/reductases (SDR) family.

This is an uncharacterized protein from Schizosaccharomyces pombe (strain 972 / ATCC 24843) (Fission yeast).